Consider the following 377-residue polypeptide: MKNFILLAVSSILLVDLFPTHCGHNVDLSKAINLNGVNFNNVDASSLGAAHVGQSASRGRGLGENPDDEEGDAKKKKDGKKAEPKNPRENKLKQPGDRADGQPAGDRADGQPAGDRADGQPAGDRADGQPAGDRAAGQPAGDRADGQPAGDRADGQPAGDRADGQPAGDRADGQPAGDRAAGQPAGDRAAGQPAGDRADGQPAGDRAAGQPAGDRADGQPAGDRAAGQPAGDRADGQPAGDRAAGQPAGDRAAGQPAGDRAAGQAAGDRAAGQAAGGNAGGQGQNNEGANAPNEKSVKEYLDKVRATVGTEWTPCSVTCGVGVRVRRRVNAANKKPEDLTLNDLETDVCTMDKCAGIFNVVSNSLGLVILLVLALFN.

The first 22 residues, 1–22 (MKNFILLAVSSILLVDLFPTHC), serve as a signal peptide directing secretion. The interval 51–294 (HVGQSASRGR…NNEGANAPNE (244 aa)) is disordered. The segment covering 72–100 (DAKKKKDGKKAEPKNPRENKLKQPGDRAD) has biased composition (basic and acidic residues). The tract at residues 80–88 (KKAEPKNPR) is required for the binding to heparan sulfate proteoglycans (HSPGs) on the surface of host hepatocytes. The segment at 91–95 (KLKQP) is region I; contains the proteolytic cleavage site. Repeat copies occupy residues 95–103 (PGDRADGQP), 104–112 (AGDRADGQP), 113–121 (AGDRADGQP), 122–130 (AGDRADGQP), 131–139 (AGDRAAGQP), 140–148 (AGDRADGQP), 149–157 (AGDRADGQP), 158–166 (AGDRADGQP), 167–175 (AGDRADGQP), 176–184 (AGDRAAGQP), 185–193 (AGDRAAGQP), 194–202 (AGDRADGQP), 203–211 (AGDRAAGQP), 212–220 (AGDRADGQP), 221–229 (AGDRAAGQP), 230–238 (AGDRADGQP), 239–247 (AGDRAAGQP), 248–256 (AGDRAAGQP), 257–265 (AGDRAAGQA), and 266–274 (AGDRAAGQA). The tract at residues 95 to 274 (PGDRADGQPA…AAGDRAAGQA (180 aa)) is 20 X 9 AA tandem repeats of [PA]-G-D-R-A-[DA]-G-Q-[PA]. Low complexity predominate over residues 236 to 273 (GQPAGDRAAGQPAGDRAAGQPAGDRAAGQAAGDRAAGQ). The span at 274–283 (AAGGNAGGQG) shows a compositional bias: gly residues. The segment covering 284-293 (QNNEGANAPN) has biased composition (low complexity). Positions 303–355 (KVRATVGTEWTPCSVTCGVGVRVRRRVNAANKKPEDLTLNDLETDVCTMDKCA) constitute a TSP type-1 domain. 2 cysteine pairs are disulfide-bonded: cysteine 315–cysteine 349 and cysteine 319–cysteine 354. Residue threonine 318 is glycosylated (O-linked (Fuc) threonine). A lipid anchor (GPI-anchor amidated cysteine) is attached at cysteine 354. Positions 355 to 377 (AGIFNVVSNSLGLVILLVLALFN) are cleaved as a propeptide — removed in mature form.

The protein belongs to the plasmodium circumsporozoite protein family. In terms of processing, during host cell invasion, proteolytically cleaved at the cell membrane in the region I by a papain-like cysteine protease of parasite origin. Cleavage is triggered by the sporozoite contact with highly sulfated heparan sulfate proteoglycans (HSPGs) present on the host hepatocyte cell surface. Cleavage exposes the TSP type-1 (TSR) domain and is required for productive invasion of host hepatocytes but not for adhesion to the host cell membrane. Cleavage is dispensable for sporozoite development in the oocyst, motility and for traversal of host and vector cells. O-glycosylated; maybe by POFUT2.

Its subcellular location is the cell membrane. The protein localises to the cytoplasm. In terms of biological role, essential sporozoite protein. In the mosquito vector, required for sporozoite development in the oocyst, migration through the vector hemolymph and entry into the vector salivary glands. In the vertebrate host, required for sporozoite migration through the host dermis and infection of host hepatocytes. Binds to highly sulfated heparan sulfate proteoglycans (HSPGs) on the surface of host hepatocytes. Its function is as follows. In the vertebrate host, binds to highly sulfated heparan sulfate proteoglycans (HSPGs) on the surface of host hepatocytes and is required for sporozoite invasion of the host hepatocytes. The chain is Circumsporozoite protein from Plasmodium vivax (strain Salvador I).